A 97-amino-acid polypeptide reads, in one-letter code: ORF9b protein (97 aa).

Residues 8–97 (MHPALRLVDP…PDEFVVVTVK (90 aa)) enclose the 9b domain. A Nuclear export signal motif is present at residues 45–53 (ILRLGSPLS).

It belongs to the coronavirus group 2 protein 9b family. In terms of assembly, homodimer. Interacts with host TOMM70; the interaction occurs only with monomer.

It is found in the host cytoplasm. Its subcellular location is the host mitochondrion. Its function is as follows. Plays a role in inhibiting the host innate immune response by targeting the mitochondrial-associated innate immune response. Acts by binding to host TOMM70, inhibiting its binding to HSP90AB1 thereby disrupting the interferon activation pathway. The protein is ORF9b protein of Homo sapiens (Human).